A 667-amino-acid chain; its full sequence is Single-minded homolog 2 (667 aa).

One can recognise a bHLH domain in the interval 1-53 (MKEKSKNAAKTRREKENGEFYELAKLLPLPSAITSQLDKASIIRLTTSYLKMR). 2 consecutive PAS domains span residues 77-149 (AKEL…LHHH) and 218-288 (PPSA…LVKG). Residues 292-335 (TKYYRLLSKRGGWVWVQSYATVVHNSRSSRPHCIVSVNYVLTEI) form the PAC domain. The region spanning 336–667 (EYKELQLSLE…GASVIITNGR (332 aa)) is the Single-minded C-terminal domain. Disordered stretches follow at residues 356-389 (WRTA…YPPQ), 409-428 (ASPP…SESS), and 500-520 (SSSS…RHSL). Residues 367-386 (RKLVKPKNTKMKTKLRTNPY) carry the Nuclear localization signal motif. A compositionally biased stretch (basic residues) spans 369–381 (LVKPKNTKMKTKL). Over residues 409–419 (ASPPASAAAPP) the composition is skewed to low complexity.

In terms of assembly, efficient DNA binding requires dimerization with another bHLH protein. Heterodimer of SIM2 and ARNT.

The protein resides in the nucleus. Functionally, transcription factor that may be a master gene of CNS development in cooperation with Arnt. It may have pleiotropic effects in the tissues expressed during development. The polypeptide is Single-minded homolog 2 (SIM2) (Homo sapiens (Human)).